Consider the following 179-residue polypeptide: MAKLHDYYKDEVVQKLMTQFGYNSVMQVPRVEKITLNMGVGEAIADKKLLDNAAADLAAISGQKPLITKARKSVAGFKIRQGYPIGCKVTLRGERMWEFLERLISIAVPRIRDFRGLSAKSFDGRGNYSMGVREQIIFPEIDYDKVDRVRGLDITITTTAKSDDEGRALLAAFNFPFRK.

Belongs to the universal ribosomal protein uL5 family. As to quaternary structure, part of the 50S ribosomal subunit; part of the 5S rRNA/L5/L18/L25 subcomplex. Contacts the 5S rRNA and the P site tRNA. Forms a bridge to the 30S subunit in the 70S ribosome.

In terms of biological role, this is one of the proteins that bind and probably mediate the attachment of the 5S RNA into the large ribosomal subunit, where it forms part of the central protuberance. In the 70S ribosome it contacts protein S13 of the 30S subunit (bridge B1b), connecting the 2 subunits; this bridge is implicated in subunit movement. Contacts the P site tRNA; the 5S rRNA and some of its associated proteins might help stabilize positioning of ribosome-bound tRNAs. The chain is Large ribosomal subunit protein uL5 from Photorhabdus laumondii subsp. laumondii (strain DSM 15139 / CIP 105565 / TT01) (Photorhabdus luminescens subsp. laumondii).